Consider the following 205-residue polypeptide: ATP-dependent Clp protease proteolytic subunit (205 aa).

The active-site Nucleophile is serine 107. Residue histidine 132 is part of the active site.

This sequence belongs to the peptidase S14 family. As to quaternary structure, fourteen ClpP subunits assemble into 2 heptameric rings which stack back to back to give a disk-like structure with a central cavity, resembling the structure of eukaryotic proteasomes.

Its subcellular location is the cytoplasm. The enzyme catalyses Hydrolysis of proteins to small peptides in the presence of ATP and magnesium. alpha-casein is the usual test substrate. In the absence of ATP, only oligopeptides shorter than five residues are hydrolyzed (such as succinyl-Leu-Tyr-|-NHMec, and Leu-Tyr-Leu-|-Tyr-Trp, in which cleavage of the -Tyr-|-Leu- and -Tyr-|-Trp bonds also occurs).. Cleaves peptides in various proteins in a process that requires ATP hydrolysis. Has a chymotrypsin-like activity. Plays a major role in the degradation of misfolded proteins. This is ATP-dependent Clp protease proteolytic subunit from Pseudoalteromonas translucida (strain TAC 125).